We begin with the raw amino-acid sequence, 332 residues long: 6-phosphogluconolactonase (332 aa).

The protein belongs to the cycloisomerase 2 family.

It catalyses the reaction 6-phospho-D-glucono-1,5-lactone + H2O = 6-phospho-D-gluconate + H(+). It functions in the pathway carbohydrate degradation; pentose phosphate pathway; D-ribulose 5-phosphate from D-glucose 6-phosphate (oxidative stage): step 2/3. Functionally, catalyzes the hydrolysis of 6-phosphogluconolactone to 6-phosphogluconate. In Pectobacterium atrosepticum (strain SCRI 1043 / ATCC BAA-672) (Erwinia carotovora subsp. atroseptica), this protein is 6-phosphogluconolactonase.